We begin with the raw amino-acid sequence, 138 residues long: ATP synthase epsilon chain (138 aa).

It belongs to the ATPase epsilon chain family. In terms of assembly, F-type ATPases have 2 components, CF(1) - the catalytic core - and CF(0) - the membrane proton channel. CF(1) has five subunits: alpha(3), beta(3), gamma(1), delta(1), epsilon(1). CF(0) has three main subunits: a, b and c.

It is found in the cell membrane. Its function is as follows. Produces ATP from ADP in the presence of a proton gradient across the membrane. This is ATP synthase epsilon chain from Streptococcus suis (strain 98HAH33).